A 369-amino-acid chain; its full sequence is Queuine tRNA-ribosyltransferase (369 aa).

The active-site Proton acceptor is Asp89. Substrate-binding positions include 89–93, Asp143, Gln187, and Gly214; that span reads DSGGF. The RNA binding stretch occupies residues 245–251; it reads GVGTPED. The active-site Nucleophile is the Asp264. The interval 269 to 273 is RNA binding; important for wobble base 34 recognition; it reads TRNAR. Zn(2+) contacts are provided by Cys302, Cys304, Cys307, and His333.

This sequence belongs to the queuine tRNA-ribosyltransferase family. As to quaternary structure, homodimer. Within each dimer, one monomer is responsible for RNA recognition and catalysis, while the other monomer binds to the replacement base PreQ1. Zn(2+) is required as a cofactor.

The catalysed reaction is 7-aminomethyl-7-carbaguanine + guanosine(34) in tRNA = 7-aminomethyl-7-carbaguanosine(34) in tRNA + guanine. It functions in the pathway tRNA modification; tRNA-queuosine biosynthesis. Functionally, catalyzes the base-exchange of a guanine (G) residue with the queuine precursor 7-aminomethyl-7-deazaguanine (PreQ1) at position 34 (anticodon wobble position) in tRNAs with GU(N) anticodons (tRNA-Asp, -Asn, -His and -Tyr). Catalysis occurs through a double-displacement mechanism. The nucleophile active site attacks the C1' of nucleotide 34 to detach the guanine base from the RNA, forming a covalent enzyme-RNA intermediate. The proton acceptor active site deprotonates the incoming PreQ1, allowing a nucleophilic attack on the C1' of the ribose to form the product. After dissociation, two additional enzymatic reactions on the tRNA convert PreQ1 to queuine (Q), resulting in the hypermodified nucleoside queuosine (7-(((4,5-cis-dihydroxy-2-cyclopenten-1-yl)amino)methyl)-7-deazaguanosine). The polypeptide is Queuine tRNA-ribosyltransferase (Dechloromonas aromatica (strain RCB)).